Consider the following 229-residue polypeptide: Flagellar L-ring protein (229 aa).

An N-terminal signal peptide occupies residues 1–23 (MNPLTRVALAVAAFAALVLALSA). Cys-24 carries the N-palmitoyl cysteine lipid modification. Cys-24 is lipidated: S-diacylglycerol cysteine.

This sequence belongs to the FlgH family. The basal body constitutes a major portion of the flagellar organelle and consists of four rings (L,P,S, and M) mounted on a central rod.

The protein localises to the cell outer membrane. Its subcellular location is the bacterial flagellum basal body. Its function is as follows. Assembles around the rod to form the L-ring and probably protects the motor/basal body from shearing forces during rotation. This chain is Flagellar L-ring protein, found in Anaeromyxobacter dehalogenans (strain 2CP-1 / ATCC BAA-258).